We begin with the raw amino-acid sequence, 365 residues long: Peptide chain release factor 2 (365 aa).

At glutamine 252 the chain carries N5-methylglutamine.

It belongs to the prokaryotic/mitochondrial release factor family. Post-translationally, methylated by PrmC. Methylation increases the termination efficiency of RF2.

The protein localises to the cytoplasm. In terms of biological role, peptide chain release factor 2 directs the termination of translation in response to the peptide chain termination codons UGA and UAA. The protein is Peptide chain release factor 2 of Proteus mirabilis (strain HI4320).